A 1704-amino-acid chain; its full sequence is Phospholipid-transporting ATPase ABCA3 (1704 aa).

N-linked (GlcNAc...) asparagine glycosylation is present at N14. The helical transmembrane segment at 22 to 42 threads the bilayer; sequence VLVTVLELFLPLLFSGILIWL. N-linked (GlcNAc...) asparagine glycans are attached at residues N53, N124, and N140. Helical transmembrane passes span 261–283, 307–327, 344–364, 373–393, 405–425, and 447–467; these read YQLPLLLLLSFTYTALTIARAVV, AWFLLFFLFLLIAASFMTLLF, SLVLAFLLCFAISTISFSFMV, MAAAFGGFLYFFTYIPYFFVA, LCSCLLSNVAMAMGAQLIGKF, and FCFGQVLGMLLLDSVLYGLVT. The 234-residue stretch at 530-763 folds into the ABC transporter 1 domain; the sequence is IKIKHLSKVF…YGAGYHMTLV (234 aa). 566–573 contributes to the ATP binding site; sequence GHNGAGKT. N-linked (GlcNAc...) asparagine glycosylation is found at N620 and N783. 7 helical membrane passes run 925–945, 1100–1120, 1144–1164, 1183–1203, 1213–1233, 1245–1265, and 1306–1326; these read MVAAQVLVPLTCVTLALLAIN, IALNLLFAMAFLASTFSILAV, SALLWDLISFLIPSLLLLVVF, LLLLLYGWAIIPLMYLMNFFF, LTIFNILSGIATFLMVTIMRI, LDHVFLVLPNHCLGMAVSSFY, and FVASMAASGCAYLILLFLIET. The ABC transporter 2 domain maps to 1381–1614; sequence LIIKELSKVY…FGSGYSLRAK (234 aa). 1416-1423 contacts ATP; that stretch reads GFNGAGKT.

This sequence belongs to the ABC transporter superfamily. ABCA family. As to quaternary structure, homooligomer; disulfide-linked. In terms of processing, N-glycosylated. Localization at intracellular vesicles is accompanied by processing of oligosaccharide from high mannose type to complex type. N-linked glycosylation at Asn-124 and Asn-140 is required for stability and efficient anterograde trafficking and prevents from proteasomal degradation. Proteolytically cleaved by CTSL and to a lower extent by CTSB within multivesicular bodies (MVB) and lamellar bodies (LB) leading to a mature form of 150 kDa. In terms of tissue distribution, expressed in brain, pancreas, skeletal muscle and heart. Highly expressed in the lung in an AT2-cell-specific manner. Weakly expressed in placenta, kidney and liver. Also expressed in medullary thyroid carcinoma cells (MTC) and in C-cell carcinoma.

It is found in the endosome. Its subcellular location is the multivesicular body membrane. The protein localises to the cytoplasmic vesicle membrane. It localises to the late endosome membrane. The protein resides in the lysosome membrane. The enzyme catalyses ATP + H2O + xenobioticSide 1 = ADP + phosphate + xenobioticSide 2.. It catalyses the reaction a 1,2-diacyl-sn-glycero-3-phosphocholine(in) + ATP + H2O = a 1,2-diacyl-sn-glycero-3-phosphocholine(out) + ADP + phosphate + H(+). It carries out the reaction ATP + H2O + phospholipidSide 1 = ADP + phosphate + phospholipidSide 2.. The catalysed reaction is 1,2-dihexadecanoyl-sn-glycero-3-phosphocholine(in) + ATP + H2O = 1,2-dihexadecanoyl-sn-glycero-3-phosphocholine(out) + ADP + phosphate + H(+). The enzyme catalyses cholesterol(in) + ATP + H2O = cholesterol(out) + ADP + phosphate + H(+). It catalyses the reaction a 1,2-diacyl-sn-glycero-3-phospho-(1'-sn-glycerol)(in) + ATP + H2O = a 1,2-diacyl-sn-glycero-3-phospho-(1'-sn-glycerol)(out) + ADP + phosphate + H(+). Its activity is regulated as follows. The ATP-dependent phosphatidylcholine transport is competitively inhibited by miltefosine. In terms of biological role, catalyzes the ATP-dependent transport of phospholipids such as phosphatidylcholine and phosphoglycerol from the cytoplasm into the lumen side of lamellar bodies, in turn participates in the lamellar bodies biogenesis and homeostasis of pulmonary surfactant. Transports preferentially phosphatidylcholine containing short acyl chains. In addition plays a role as an efflux transporter of miltefosine across macrophage membranes and free cholesterol (FC) through intralumenal vesicles by removing FC from the cell as a component of surfactant and protects cells from free cholesterol toxicity. This chain is Phospholipid-transporting ATPase ABCA3, found in Homo sapiens (Human).